The primary structure comprises 402 residues: UDP-glucose 6-dehydrogenase (402 aa).

Residues 2 to 19, Val11, Asp29, Lys34, Thr83, Thr118, and Glu145 each bind NAD(+); that span reads KIAVAGSGYVGLSLGVLL. Residues 141-145, Lys204, Asn208, 249-253, and Gly257 each bind substrate; these read EFLRE and YNNPS. Tyr259 is an NAD(+) binding site. Cys260 (nucleophile) is an active-site residue. NAD(+) is bound at residue Lys263. Lys320 is a substrate binding site. Arg327 is a binding site for NAD(+).

This sequence belongs to the UDP-glucose/GDP-mannose dehydrogenase family.

It catalyses the reaction UDP-alpha-D-glucose + 2 NAD(+) + H2O = UDP-alpha-D-glucuronate + 2 NADH + 3 H(+). The protein operates within nucleotide-sugar biosynthesis; UDP-alpha-D-glucuronate biosynthesis; UDP-alpha-D-glucuronate from UDP-alpha-D-glucose: step 1/1. Functionally, catalyzes the formation of UDP-glucuronic acid which is required for capsular hyaluronic acid synthesis. This Streptococcus pyogenes serotype M18 (strain MGAS8232) protein is UDP-glucose 6-dehydrogenase (hasB).